We begin with the raw amino-acid sequence, 678 residues long: ATP-dependent RNA helicase DHX58 (678 aa).

In terms of domain architecture, Helicase ATP-binding spans 11 to 188 (IMPALEGKNI…DGAINHVLQL (178 aa)). 24-31 (LPTGAGKT) is an ATP binding site. Residues 131–134 (DECH) carry the DECH box motif. Residues 350–514 (KLEMLEKILQ…QAVAAVQKMD (165 aa)) form the Helicase C-terminal domain. The stretch at 489-546 (ELKRELINEALETLMEQAVAAVQKMDQAEYQAKIRDLQQAALTKRAAQAAQRENQRQQ) forms a coiled coil. The RLR CTR domain maps to 539–669 (QRENQRQQFP…PDFDFLQHCA (131 aa)). Zn(2+)-binding residues include cysteine 556, cysteine 559, cysteine 612, and cysteine 615. Residues 572–655 (VEGTHHVNVN…RIQAKKWSRV (84 aa)) are RNA-binding.

The protein belongs to the helicase family. RLR subfamily. In terms of assembly, monomer in the absence of dsRNA. Homodimer in the presence of dsRNA. Interacts with RIGI (via CARD domain), MAVS/IPS1 and DDX60. Found in a complex with RIGI and IFIH1/MDA5. Interacts with ANKRD17. Directly interacts with ATG5 and ATG12, either as ATG5 and ATG12 monomers or as ATG12-ATG5 conjugates. (Microbial infection) Interacts (via helicase C-terminal domain) with non-structural protein V of paramyxoviruses including human parainfluenza 2 virus, human parainfluenza 5 virus, measles virus, mumps virus, hendra virus and nipah virus. As to expression, expressed in testis, nerve and spleen. Also expressed in the brain.

The protein resides in the cytoplasm. It carries out the reaction ATP + H2O = ADP + phosphate + H(+). Functionally, acts as a regulator of RIGI and IFIH1/MDA5 mediated antiviral signaling. Cannot initiate antiviral signaling as it lacks the CARD domain required for activating MAVS/IPS1-dependent signaling events. Can have both negative and positive regulatory functions related to RIGI and IFIH1/MDA5 signaling and this role in regulating signaling may be complex and could probably depend on characteristics of the infecting virus or target cells, or both. Its inhibitory action on RIG-I signaling may involve the following mechanisms: competition with RIGI for binding to the viral RNA, binding to RIGI and inhibiting its dimerization and interaction with MAVS/IPS1, competing with IKBKE in its binding to MAVS/IPS1 thereby inhibiting activation of interferon regulatory factor 3 (IRF3). Its positive regulatory role may involve unwinding or stripping nucleoproteins of viral RNA thereby facilitating their recognition by RIGI and IFIH1/MDA5. Involved in the innate immune response to various RNA viruses and some DNA viruses such as poxviruses and coronavirus SARS-CoV-2, and also to the bacterial pathogen Listeria monocytogenes. Can bind both ssRNA and dsRNA, with a higher affinity for dsRNA. Shows a preference to 5'-triphosphorylated RNA, although it can recognize RNA lacking a 5'-triphosphate. The polypeptide is ATP-dependent RNA helicase DHX58 (Homo sapiens (Human)).